The sequence spans 412 residues: Putative competence-damage inducible protein (412 aa).

Belongs to the CinA family.

The sequence is that of Putative competence-damage inducible protein from Bacillus cytotoxicus (strain DSM 22905 / CIP 110041 / 391-98 / NVH 391-98).